Consider the following 215-residue polypeptide: CASP-like protein UU3 (215 aa).

At 1–44 the chain is on the cytoplasmic side; it reads MATAWESEYFDKVTPGERERAVPPMVPQQTPPPVYIQPQVSRNG. A helical membrane pass occupies residues 45-65; sequence IVASIVLRLLTLIFAVVALAV. At 66–93 the chain is on the extracellular side; it reads LASNTGSFQVSTGSATSVKTIKFTILSA. Residues 94–114 traverse the membrane as a helical segment; sequence FTYLFAVCGVVAVYSLLLIIV. At 115 to 128 the chain is on the cytoplasmic side; sequence EMIDLAVRGFTTHT. The chain crosses the membrane as a helical span at residues 129 to 149; the sequence is LVAIFVFVLDQTMAYVLISAA. At 150–185 the chain is on the extracellular side; the sequence is SASANGVKVSRDESNITGYKFDISCSNLGIDDYCTK. N-linked (GlcNAc...) asparagine glycosylation occurs at Asn-164. A helical transmembrane segment spans residues 186-206; sequence ASASVAIAFIAFLFMAITAGV. Topologically, residues 207–215 are cytoplasmic; that stretch reads SARRLFKLP.

This sequence belongs to the Casparian strip membrane proteins (CASP) family. In terms of assembly, homodimer and heterodimers.

The protein resides in the cell membrane. This chain is CASP-like protein UU3, found in Physcomitrium patens (Spreading-leaved earth moss).